Here is a 424-residue protein sequence, read N- to C-terminus: Zinc finger and BTB domain-containing protein 6 (424 aa).

In terms of domain architecture, BTB spans 33 to 97 (CDVSIYINDT…CYTGALEVKR (65 aa)). Ser-202 carries the phosphoserine modification. 4 consecutive C2H2-type zinc fingers follow at residues 301–323 (HQCP…LKMH), 326–348 (FLCL…IRGH), 354–376 (FQCT…LNIH), and 382–405 (YKCH…TSVH). The interval 402–424 (TSVHGRSSGEKLSRPDLKRQSLL) is disordered. The segment covering 408–424 (SSGEKLSRPDLKRQSLL) has biased composition (basic and acidic residues).

Widely expressed with highest levels in brain.

It is found in the nucleus. In terms of biological role, may be involved in transcriptional regulation. The sequence is that of Zinc finger and BTB domain-containing protein 6 (ZBTB6) from Homo sapiens (Human).